The following is an 80-amino-acid chain: Serine palmitoyltransferase small subunit A-A (80 aa).

Topologically, residues 1–21 (MKVLCEDVNGPRSSLGRAWSH) are cytoplasmic. A helical transmembrane segment spans residues 22–38 (MSWLYYQYLLVTALYML). The Lumenal portion of the chain corresponds to 39–43 (EPWER). A helical transmembrane segment spans residues 44-66 (TVFNSMLVSIVGMALYTGYIFMP). Residues 67 to 80 (QHILAILHYFEIVQ) are Cytoplasmic-facing.

The protein belongs to the SPTSS family. SPTSSA subfamily. In terms of assembly, component of the serine palmitoyltransferase (SPT) complex, which is composed of SPTLC1, SPTLC2 or SPTLC3 and SPTSSA or SPTSSB. The heterodimer consisting of SPTLC1 and SPTLC2/SPTLC3 forms the catalytic core of the enzyme, while SPTSSA or SPTSSB subunits determine substrate specificity. SPT also interacts with ORMDL proteins, especially ORMDL3, which negatively regulate SPT activity in the presence of ceramides.

The protein resides in the endoplasmic reticulum membrane. It functions in the pathway lipid metabolism; sphingolipid metabolism. Functionally, component of the serine palmitoyltransferase multisubunit enzyme (SPT) that catalyzes the initial and rate-limiting step in sphingolipid biosynthesis by condensing L-serine and activated acyl-CoA (most commonly palmitoyl-CoA) to form long-chain bases. The SPT complex is composed of SPTLC1, SPTLC2 or SPTLC3 and SPTSSA or SPTSSB. Within this complex, the heterodimer consisting of SPTLC1 and SPTLC2/SPTLC3 forms the catalytic core. Within the SPT complex, SPTSSA stimulates the catalytic activity and plays a role in substrate specificity, which depends upon the overall complex composition. The SPTLC1-SPTLC2-SPTSSA complex shows a strong preference for C16-CoA substrate, while the SPTLC1-SPTLC3-SPTSSA isozyme uses both C14-CoA and C16-CoA as substrates, with a slight preference for C14-CoA. Independently of its action as a SPT component, may be involved in MBOAT7 localization to mitochondria-associated membranes, a membrane bridge between the endoplasmic reticulum and mitochondria, may hence affect MBOAT7-catalyzed incorporation of arachidonic acid into phosphatidylinositol. In Xenopus laevis (African clawed frog), this protein is Serine palmitoyltransferase small subunit A-A (sptssa-a).